The following is a 446-amino-acid chain: Exodeoxyribonuclease 7 large subunit (446 aa).

This sequence belongs to the XseA family. Heterooligomer composed of large and small subunits.

The protein resides in the cytoplasm. The enzyme catalyses Exonucleolytic cleavage in either 5'- to 3'- or 3'- to 5'-direction to yield nucleoside 5'-phosphates.. Bidirectionally degrades single-stranded DNA into large acid-insoluble oligonucleotides, which are then degraded further into small acid-soluble oligonucleotides. The chain is Exodeoxyribonuclease 7 large subunit from Vibrio cholerae serotype O1 (strain ATCC 39315 / El Tor Inaba N16961).